The sequence spans 294 residues: Survival motor neuron protein (294 aa).

The segment covering 1-12 (MAMSSGGSGGGV) has biased composition (gly residues). Residues 1 to 32 (MAMSSGGSGGGVPEQEDSVLFRRGTGQSDDSD) form a disordered region. The residue at position 2 (alanine 2) is an N-acetylalanine. Phosphoserine; by PKA occurs at positions 4, 5, and 8. Position 25 is a phosphothreonine (threonine 25). The interval 26–51 (GQSDDSDIWDDTALIKAYDKAVASFK) is interacts with GEMIN2. Serine 28 and serine 31 each carry phosphoserine. A Glycyl lysine isopeptide (Lys-Gly) (interchain with G-Cter in SUMO2) cross-link involves residue lysine 51. A disordered region spans residues 59 to 88 (ICETSGKPKTTPKRKPAKKNKSQKKNTAAS). Basic residues predominate over residues 68-82 (TTPKRKPAKKNKSQK). Phosphothreonine is present on threonine 69. The residue at position 85 (threonine 85) is a Phosphothreonine; by PKA. Positions 91 to 151 (QWKVGDKCSA…LSPICEVANN (61 aa)) constitute a Tudor domain. The required for interaction with RPP20/POP7 stretch occupies residues 97 to 209 (KCSAIWSEDG…MPGPRLGPGK (113 aa)). The segment covering 156–166 (AQENENESQVS) has biased composition (low complexity). The tract at residues 156-222 (AQENENESQV…KFNGPPPPPP (67 aa)) is disordered. At serine 187 the chain carries Phosphoserine; by PKA. The segment covering 194–204 (LPPPPPMPGPR) has biased composition (pro residues). Positions 206 to 215 (GPGKPGLKFN) are enriched in low complexity. Residue lysine 209 forms a Glycyl lysine isopeptide (Lys-Gly) (interchain with G-Cter in SUMO2) linkage. The tract at residues 240–267 (PPIIPPPPPICPDSLDDADALGSMLISW) is P2 (binding site for SNRPB). Residues 252 to 280 (DSLDDADALGSMLISWYMSGYHTGYYMGF) form an involved in homooligomerization region. Residues 279-294 (GFRQNQKEGRCSHSLN) are required for interaction with SYNCRIP.

Belongs to the SMN family. As to quaternary structure, homooligomer; may form higher order homooligomers in the dimer to octamer range. Part of the core SMN complex that contains SMN1, GEMIN2/SIP1, DDX20/GEMIN3, GEMIN4, GEMIN5, GEMIN6, GEMIN7, GEMIN8 and STRAP/UNRIP. Part of the SMN-Sm complex that contains SMN1, GEMIN2/SIP1, DDX20/GEMIN3, GEMIN4, GEMIN5, GEMIN6, GEMIN7, GEMIN8, STRAP/UNRIP and the Sm proteins SNRPB, SNRPD1, SNRPD2, SNRPD3, SNRPE, SNRPF and SNRPG. Component of an import snRNP complex composed of KPNB1, RNUT1, SMN1 and ZNF259. Interacts with DDX20, FBL, NOLA1, RNUT1, SYNCRIP and with several spliceosomal snRNP core Sm proteins, including SNRPB, SNRPD1, SNRPD2, SNRPD3, SNRPE and ILF3. Interacts with GEMIN2; the interaction is direct. Interacts with GEMIN3; the interaction is direct. Interacts with GEMIN8; the interaction is direct. Interacts with SNRPB; the interaction is direct. Interacts (via Tudor domain) with SNRPD1 (via C-terminus); the interaction is direct. Interacts with SNRPD2; the interaction is direct. Interacts (via Tudor domain) with SNRPD3 (via C-terminus); the interaction is direct. Interacts with SNRPE; the interaction is direct. Interacts with OSTF1, LSM10, LSM11 and RPP20/POP7. Interacts (via C-terminal region) with ZPR1 (via C-terminal region). Interacts (via Tudor domain) with COIL. Interacts with SETX; recruits SETX to POLR2A. Interacts with POLR2A (via the C-terminal domain (CTD)). Interacts with PRMT5. Interacts with XRN2. Interacts (via C-terminus) with FMR1 (via C-terminus); the interaction is direct and occurs in a RNA-independent manner. Interacts (via Tudor domain) with SF3B2 ('Arg-508'-methylated form). Interacts with WRAP53/TCAB1. Interacts (via Tudor domain) with ELAVL4 in an RNA-independent manner; the interaction is required for localization of ELAVL4 to RNA granules. Interacts with FRG1. Does not homooligomerize. Does not interact with SNRPB. As to expression, expressed in a wide variety of tissues. Expressed at high levels in brain, kidney and liver, moderate levels in skeletal and cardiac muscle, and low levels in fibroblasts and lymphocytes. Also seen at high levels in spinal cord. Present in osteoclasts and mononuclear cells (at protein level).

Its subcellular location is the nucleus. The protein resides in the gem. It is found in the cajal body. It localises to the cytoplasm. The protein localises to the cytoplasmic granule. Its subcellular location is the perikaryon. The protein resides in the cell projection. It is found in the neuron projection. It localises to the axon. The protein localises to the myofibril. Its subcellular location is the sarcomere. The protein resides in the z line. Its function is as follows. The SMN complex catalyzes the assembly of small nuclear ribonucleoproteins (snRNPs), the building blocks of the spliceosome, and thereby plays an important role in the splicing of cellular pre-mRNAs. Most spliceosomal snRNPs contain a common set of Sm proteins SNRPB, SNRPD1, SNRPD2, SNRPD3, SNRPE, SNRPF and SNRPG that assemble in a heptameric protein ring on the Sm site of the small nuclear RNA to form the core snRNP (Sm core). In the cytosol, the Sm proteins SNRPD1, SNRPD2, SNRPE, SNRPF and SNRPG are trapped in an inactive 6S pICln-Sm complex by the chaperone CLNS1A that controls the assembly of the core snRNP. To assemble core snRNPs, the SMN complex accepts the trapped 5Sm proteins from CLNS1A forming an intermediate. Within the SMN complex, SMN1 acts as a structural backbone and together with GEMIN2 it gathers the Sm complex subunits. Binding of snRNA inside 5Sm ultimately triggers eviction of the SMN complex, thereby allowing binding of SNRPD3 and SNRPB to complete assembly of the core snRNP. Ensures the correct splicing of U12 intron-containing genes that may be important for normal motor and proprioceptive neurons development. Also required for resolving RNA-DNA hybrids created by RNA polymerase II, that form R-loop in transcription terminal regions, an important step in proper transcription termination. May also play a role in the metabolism of small nucleolar ribonucleoprotein (snoRNPs). In Homo sapiens (Human), this protein is Survival motor neuron protein (SMN1).